Consider the following 481-residue polypeptide: Putative amino-acid transporter CPE0389 (481 aa).

Transmembrane regions (helical) follow at residues 7 to 27 (LGVI…GVYN), 36 to 56 (ASAG…WFIA), 87 to 107 (FLMA…YAVL), 127 to 147 (LSIA…LAGV), 156 to 176 (IGTI…LFSF), 208 to 228 (STML…VVSG), 241 to 261 (FLGF…PLGV), 289 to 309 (VIMN…WTVM), 338 to 358 (FSLL…HFAG), 364 to 384 (MLSI…LYLF), 401 to 421 (RKYA…LIYA), 422 to 442 (AGIN…PVFI), and 461 to 481 (YFAI…FKFM).

It belongs to the amino acid-polyamine-organocation (APC) superfamily. Basic amino acid/polyamine antiporter (APA) (TC 2.A.3.2) family.

Its subcellular location is the cell membrane. Its function is as follows. Could be an amino acid transporter. The sequence is that of Putative amino-acid transporter CPE0389 from Clostridium perfringens (strain 13 / Type A).